The following is a 561-amino-acid chain: Nucleoprotein (561 aa).

The interval 52 to 237 (VRKDKRTDSD…ISHEPSALNI (186 aa)) is binding site for the cap structure m7GTP. The interval 336 to 355 (SKPSAIQPPVRNGGSPDLKQ) is disordered. Aspartate 380 and glutamate 382 together coordinate Mn(2+). Zn(2+)-binding residues include glutamate 390, cysteine 497, histidine 500, and cysteine 521. Aspartate 525 is a Mn(2+) binding site.

Belongs to the arenaviridae nucleocapsid protein family. In terms of assembly, homomultimerizes to form the nucleocapsid. Binds to viral genomic RNA. Interacts with glycoprotein G2. Interacts with protein Z; this interaction probably directs the encapsidated genome to budding sites. Interacts with protein L; this interaction does not interfere with Z-L interaction. Interacts with host IKBKE (via Protein kinase domain); the interaction inhibits IKBKE kinase activity.

Its subcellular location is the virion. The protein localises to the host cytoplasm. Encapsidates the genome, protecting it from nucleases. The encapsidated genomic RNA is termed the nucleocapsid (NC). Serves as template for viral transcription and replication. The increased presence of protein N in host cell does not seem to trigger the switch from transcription to replication as observed in other negative strain RNA viruses. Through the interaction with host IKBKE, strongly inhibits the phosphorylation and nuclear translocation of host IRF3, a protein involved in interferon activation pathway, leading to the inhibition of interferon-beta and IRF3-dependent promoters activation. Also encodes a functional 3'-5' exoribonuclease that degrades preferentially dsRNA substrates and thereby participates in the suppression of interferon induction. This Cavia cutleri (Guinea pig) protein is Nucleoprotein.